The sequence spans 593 residues: UvrABC system protein C (593 aa).

In terms of domain architecture, GIY-YIG spans 17–94; it reads MEPGCYLMKD…IKQYQPRYNI (78 aa). Positions 199 to 234 constitute a UVR domain; that stretch reads KTILKSLEERMLTASESLDFERAKEYRDLIQHIQNL.

Belongs to the UvrC family. As to quaternary structure, interacts with UvrB in an incision complex.

It is found in the cytoplasm. Functionally, the UvrABC repair system catalyzes the recognition and processing of DNA lesions. UvrC both incises the 5' and 3' sides of the lesion. The N-terminal half is responsible for the 3' incision and the C-terminal half is responsible for the 5' incision. The sequence is that of UvrABC system protein C from Staphylococcus aureus (strain MRSA252).